We begin with the raw amino-acid sequence, 316 residues long: MEKLNIIFAGTPDFAAKHLSALINSEHNVIAVYTQPDRPAGRGKRLTASAVKELAMEQQIPVYQPANFKEVDSTKQLAALNADLMIVVAYGLLLPQLVLGIPRLGCLNVHGSLLPRWRGAAPIQRAIWAGDTETGVTIMQMDEGLDTGDMLAKVSCPIERDETSASLYEKLALQAPDVLVDTINKLVKGELKAEKQDPQLACYAKKLSKSEALIDWSKDAVFIERCIRAFNPWPVSYFVLDDKVIKVRQAGLLATKSEQTAGTIITASKNGIQVATGEGIINLEVLQLAGKKALPVQDILNSRRELFAQGTLLQQG.

112-115 (SLLP) contributes to the (6S)-5,6,7,8-tetrahydrofolate binding site.

The protein belongs to the Fmt family.

The enzyme catalyses L-methionyl-tRNA(fMet) + (6R)-10-formyltetrahydrofolate = N-formyl-L-methionyl-tRNA(fMet) + (6S)-5,6,7,8-tetrahydrofolate + H(+). Attaches a formyl group to the free amino group of methionyl-tRNA(fMet). The formyl group appears to play a dual role in the initiator identity of N-formylmethionyl-tRNA by promoting its recognition by IF2 and preventing the misappropriation of this tRNA by the elongation apparatus. The protein is Methionyl-tRNA formyltransferase of Psychromonas ingrahamii (strain DSM 17664 / CCUG 51855 / 37).